A 217-amino-acid chain; its full sequence is GTP cyclohydrolase 1 (217 aa).

3 residues coordinate Zn(2+): cysteine 108, histidine 111, and cysteine 179.

This sequence belongs to the GTP cyclohydrolase I family. As to quaternary structure, toroid-shaped homodecamer, composed of two pentamers of five dimers.

The enzyme catalyses GTP + H2O = 7,8-dihydroneopterin 3'-triphosphate + formate + H(+). It functions in the pathway cofactor biosynthesis; 7,8-dihydroneopterin triphosphate biosynthesis; 7,8-dihydroneopterin triphosphate from GTP: step 1/1. This is GTP cyclohydrolase 1 from Shewanella denitrificans (strain OS217 / ATCC BAA-1090 / DSM 15013).